The chain runs to 289 residues: ATP synthase gamma chain (289 aa).

This sequence belongs to the ATPase gamma chain family. In terms of assembly, F-type ATPases have 2 components, CF(1) - the catalytic core - and CF(0) - the membrane proton channel. CF(1) has five subunits: alpha(3), beta(3), gamma(1), delta(1), epsilon(1). CF(0) has three main subunits: a, b and c.

The protein resides in the cell inner membrane. Produces ATP from ADP in the presence of a proton gradient across the membrane. The gamma chain is believed to be important in regulating ATPase activity and the flow of protons through the CF(0) complex. This chain is ATP synthase gamma chain, found in Actinobacillus succinogenes (strain ATCC 55618 / DSM 22257 / CCUG 43843 / 130Z).